The primary structure comprises 161 residues: Interleukin-17F (161 aa).

The first 28 residues, 1-28 (MKGSCETTMVKSLLLLMLGFAIISSGAA), serve as a signal peptide directing secretion. Residue Asn83 is glycosylated (N-linked (GlcNAc...) asparagine). 2 disulfide bridges follow: Cys100-Cys150 and Cys105-Cys152.

The protein belongs to the IL-17 family. In terms of assembly, homodimer; disulfide-linked. Heterodimer with IL17A (IL17A-IL17F). Forms complexes with IL17RA and IL17RC receptors with 2:1 binding stoichiometry: two receptor chains for one interleukin molecule. IL17F homodimer forms predominantly complexes with IL17RC homodimer, whereas IL17A-IL17F favors complexes with IL17RA-IL17RC. IL17RA and IL17RC chains cannot distinguish between IL17A and IL17F molecules, potentially enabling the formation of topologically distinct complexes.

The protein resides in the secreted. In terms of biological role, effector cytokine of innate and adaptive immune system involved in antimicrobial host defense and maintenance of tissue integrity. IL17A-IL17F signals via IL17RA-IL17RC heterodimeric receptor complex, triggering homotypic interaction of IL17RA and IL17RC chains with TRAF3IP2 adapter through SEFIR domains. This leads to downstream TRAF6-mediated activation of NF-kappa-B and MAPkinase pathways ultimately resulting in transcriptional activation of cytokines, chemokines, antimicrobial peptides and matrix metalloproteinases, with potential strong immune inflammation. IL17A-IL17F is primarily involved in host defense against extracellular bacteria and fungi by inducing neutrophilic inflammation. As signature effector cytokine of T-helper 17 cells (Th17), primarily induces neutrophil activation and recruitment at infection and inflammatory sites. Stimulates the production of antimicrobial beta-defensins DEFB1, DEFB103A, and DEFB104A by mucosal epithelial cells, limiting the entry of microbes through the epithelial barriers. IL17F homodimer can signal via IL17RC homodimeric receptor complex, triggering downstream activation of TRAF6 and NF-kappa-B signaling pathway. Via IL17RC induces transcriptional activation of IL33, a potent cytokine that stimulates group 2 innate lymphoid cells and adaptive T-helper 2 cells involved in pulmonary allergic response to fungi. Likely via IL17RC, promotes sympathetic innervation of peripheral organs by coordinating the communication between gamma-delta T cells and parenchymal cells. Stimulates sympathetic innervation of thermogenic adipose tissue by driving TGFB1 expression. Regulates the composition of intestinal microbiota and immune tolerance by inducing antimicrobial proteins that specifically control the growth of commensal Firmicutes and Bacteroidetes. The sequence is that of Interleukin-17F (Il17f) from Rattus norvegicus (Rat).